The following is a 256-amino-acid chain: 3-dehydroquinate dehydratase (256 aa).

3-dehydroquinate is bound by residues 46–48 (EWR) and arginine 82. The active-site Proton donor/acceptor is the histidine 144. The Schiff-base intermediate with substrate role is filled by lysine 171. 3-dehydroquinate contacts are provided by arginine 213, serine 232, and glutamine 236.

Belongs to the type-I 3-dehydroquinase family. As to quaternary structure, homodimer.

The enzyme catalyses 3-dehydroquinate = 3-dehydroshikimate + H2O. Its pathway is metabolic intermediate biosynthesis; chorismate biosynthesis; chorismate from D-erythrose 4-phosphate and phosphoenolpyruvate: step 3/7. Functionally, involved in the third step of the chorismate pathway, which leads to the biosynthesis of aromatic amino acids. Catalyzes the cis-dehydration of 3-dehydroquinate (DHQ) and introduces the first double bond of the aromatic ring to yield 3-dehydroshikimate. The chain is 3-dehydroquinate dehydratase from Shouchella clausii (strain KSM-K16) (Alkalihalobacillus clausii).